Reading from the N-terminus, the 315-residue chain is tRNA dimethylallyltransferase (315 aa).

An ATP-binding site is contributed by glycine 10 to serine 17. Residue threonine 12 to serine 17 coordinates substrate. The interval aspartate 35 to glutamine 38 is interaction with substrate tRNA.

The protein belongs to the IPP transferase family. In terms of assembly, monomer. It depends on Mg(2+) as a cofactor.

It catalyses the reaction adenosine(37) in tRNA + dimethylallyl diphosphate = N(6)-dimethylallyladenosine(37) in tRNA + diphosphate. Catalyzes the transfer of a dimethylallyl group onto the adenine at position 37 in tRNAs that read codons beginning with uridine, leading to the formation of N6-(dimethylallyl)adenosine (i(6)A). This is tRNA dimethylallyltransferase from Thermoanaerobacter pseudethanolicus (strain ATCC 33223 / 39E) (Clostridium thermohydrosulfuricum).